The sequence spans 133 residues: Small ribosomal subunit protein uS8 (133 aa).

Belongs to the universal ribosomal protein uS8 family. As to quaternary structure, part of the 30S ribosomal subunit.

Its function is as follows. One of the primary rRNA binding proteins, it binds directly to 16S rRNA central domain where it helps coordinate assembly of the platform of the 30S subunit. The protein is Small ribosomal subunit protein uS8 of Aeropyrum pernix (strain ATCC 700893 / DSM 11879 / JCM 9820 / NBRC 100138 / K1).